The chain runs to 971 residues: U2 snRNP component HSH155 (971 aa).

2 disordered regions span residues 1–22 (MSHP…LGGQ) and 54–118 (TRTV…AVKE). Residues 8–22 (VNANNSDKSHQLGGQ) are compositionally biased toward polar residues. Residues 54–75 (TRTVQNREDSYHKRRFDMKFEP) are compositionally biased toward basic and acidic residues. The span at 78–90 (DTQTVTSSENTQD) shows a compositional bias: polar residues. HEAT repeat units follow at residues 199–237 (MIFN…DLTK), 273–310 (AGLK…ALGV), 350–387 (NHLT…NSYP), 513–550 (LGCS…LLGT), 596–633 (PFLA…VIKN), 680–717 (PPIN…LAPT), 722–759 (KEWM…AIGP), 792–829 (CGPY…YIGN), and 832–870 (KDYI…NCSG).

The protein belongs to the SF3B1 family. In terms of assembly, belongs to the CWC complex (or CEF1-associated complex), a spliceosome sub-complex reminiscent of a late-stage spliceosome composed of the U2, U5 and U6 snRNAs and at least BUD13, BUD31, BRR2, CDC40, CEF1, CLF1, CUS1, CWC2, CWC15, CWC21, CWC22, CWC23, CWC24, CWC25, CWC27, ECM2, HSH155, IST3, ISY1, LEA1, MSL1, NTC20, PRP8, PRP9, PRP11, PRP19, PRP21, PRP22, PRP45, PRP46, SLU7, SMB1, SMD1, SMD2, SMD3, SMX2, SMX3, SNT309, SNU114, SPP2, SYF1, SYF2, RSE1 and YJU2. Interacts with RDS3.

It localises to the nucleus. Contacts pre-mRNA on both sides of the branch site early in spliceosome assembly. This chain is U2 snRNP component HSH155 (HSH155), found in Saccharomyces cerevisiae (strain ATCC 204508 / S288c) (Baker's yeast).